A 635-amino-acid polypeptide reads, in one-letter code: Probable potassium transport system protein Kup (635 aa).

A run of 12 helical transmembrane segments spans residues 22-42, 59-79, 111-131, 148-168, 180-200, 216-236, 259-279, 297-317, 349-369, 378-398, 404-424, and 428-448; these read LVIGAIGVVFGDIGTSPLYTL, VLGILSLVFWALMLVVTLKYV, MYVVGILGIFGASLFFGDGVI, APKLEAFVVPITLVVLGMLFL, AFGPITLVWFFALGAIGVYNM, VLFFVEHNWHAVFVLGAVVLA, WQFVVLPMLTLTYLGQGALVL, ALYPMIVLATAATVIASQALI, IYVPAVNWCLLLAVAVAVVGF, AYGVSVTGTMLITTVLMVIYA, VPAPLLWLFALVFLAVDCAFF, and IIKFLDGAWFPLLLGLILFTL.

It belongs to the HAK/KUP transporter (TC 2.A.72) family.

Its subcellular location is the cell inner membrane. It catalyses the reaction K(+)(in) + H(+)(in) = K(+)(out) + H(+)(out). Functionally, transport of potassium into the cell. Likely operates as a K(+):H(+) symporter. The polypeptide is Probable potassium transport system protein Kup (Xanthomonas oryzae pv. oryzae (strain KACC10331 / KXO85)).